The sequence spans 151 residues: Putative pre-16S rRNA nuclease (151 aa).

The protein belongs to the YqgF nuclease family.

The protein localises to the cytoplasm. In terms of biological role, could be a nuclease involved in processing of the 5'-end of pre-16S rRNA. This Bifidobacterium longum subsp. infantis (strain ATCC 15697 / DSM 20088 / JCM 1222 / NCTC 11817 / S12) protein is Putative pre-16S rRNA nuclease.